Reading from the N-terminus, the 73-residue chain is Kappa-scoloptoxin(03)-Ssm1b (73 aa).

The signal sequence occupies residues 1-23; it reads MKPSMAILLVIALIIFSLDKSYS. 3 cysteine pairs are disulfide-bonded: C32-C58, C41-C57, and C44-C67.

Contains 3 disulfide bonds. In terms of tissue distribution, expressed by the venom gland.

The protein resides in the secreted. Inhibits voltage-gated potassium channels. The sequence is that of Kappa-scoloptoxin(03)-Ssm1b from Scolopendra mutilans (Chinese red-headed centipede).